The following is a 585-amino-acid chain: Glutamate decarboxylase (585 aa).

A compositionally biased stretch (polar residues) spans 35-56; sequence KSAVQSGHQGSNNMRDTSSQGM. Residues 35–60 are disordered; it reads KSAVQSGHQGSNNMRDTSSQGMANKY. Residue K318 is modified to N6-(pyridoxal phosphate)lysine.

It belongs to the group II decarboxylase family. It depends on pyridoxal 5'-phosphate as a cofactor.

It carries out the reaction L-glutamate + H(+) = 4-aminobutanoate + CO2. The polypeptide is Glutamate decarboxylase (GAD1) (Saccharomyces cerevisiae (strain ATCC 204508 / S288c) (Baker's yeast)).